The following is a 142-amino-acid chain: Ribosomal RNA large subunit methyltransferase H (142 aa).

Gly89 lines the S-adenosyl-L-methionine pocket.

It belongs to the RNA methyltransferase RlmH family. In terms of assembly, homodimer.

Its subcellular location is the cytoplasm. The enzyme catalyses pseudouridine(1915) in 23S rRNA + S-adenosyl-L-methionine = N(3)-methylpseudouridine(1915) in 23S rRNA + S-adenosyl-L-homocysteine + H(+). Functionally, specifically methylates the pseudouridine at position 1915 (m3Psi1915) in 23S rRNA. The chain is Ribosomal RNA large subunit methyltransferase H from Zymomonas mobilis subsp. mobilis (strain ATCC 31821 / ZM4 / CP4).